The following is a 377-amino-acid chain: Anhydro-N-acetylmuramic acid kinase (377 aa).

An ATP-binding site is contributed by 18-25 (GTSADGID).

This sequence belongs to the anhydro-N-acetylmuramic acid kinase family.

It carries out the reaction 1,6-anhydro-N-acetyl-beta-muramate + ATP + H2O = N-acetyl-D-muramate 6-phosphate + ADP + H(+). It participates in amino-sugar metabolism; 1,6-anhydro-N-acetylmuramate degradation. It functions in the pathway cell wall biogenesis; peptidoglycan recycling. Its function is as follows. Catalyzes the specific phosphorylation of 1,6-anhydro-N-acetylmuramic acid (anhMurNAc) with the simultaneous cleavage of the 1,6-anhydro ring, generating MurNAc-6-P. Is required for the utilization of anhMurNAc either imported from the medium or derived from its own cell wall murein, and thus plays a role in cell wall recycling. The protein is Anhydro-N-acetylmuramic acid kinase of Xanthomonas oryzae pv. oryzae (strain MAFF 311018).